The following is a 504-amino-acid chain: 2,3-bisphosphoglycerate-independent phosphoglycerate mutase (504 aa).

Aspartate 13 and serine 63 together coordinate Mn(2+). Residue serine 63 is the Phosphoserine intermediate of the active site. Residues histidine 124, 153-154, arginine 183, arginine 189, 254-257, and lysine 330 each bind substrate; these read RD and RADR. Residues aspartate 397, histidine 401, aspartate 438, histidine 439, and histidine 457 each contribute to the Mn(2+) site.

Belongs to the BPG-independent phosphoglycerate mutase family. Monomer. Mn(2+) serves as cofactor.

It carries out the reaction (2R)-2-phosphoglycerate = (2R)-3-phosphoglycerate. It participates in carbohydrate degradation; glycolysis; pyruvate from D-glyceraldehyde 3-phosphate: step 3/5. In terms of biological role, catalyzes the interconversion of 2-phosphoglycerate and 3-phosphoglycerate. This is 2,3-bisphosphoglycerate-independent phosphoglycerate mutase from Rhodopseudomonas palustris (strain ATCC BAA-98 / CGA009).